Consider the following 217-residue polypeptide: Probable GTP-binding protein EngB (217 aa).

Residues 33-217 (GPTEIAFAGR…RAAIELAVAR (185 aa)) form the EngB-type G domain. GTP contacts are provided by residues 41-48 (GRSNVGKS), 68-72 (GRTQE), 95-98 (DMPG), 162-165 (TKTD), and 196-198 (TSS). Mg(2+) contacts are provided by S48 and T70.

The protein belongs to the TRAFAC class TrmE-Era-EngA-EngB-Septin-like GTPase superfamily. EngB GTPase family. It depends on Mg(2+) as a cofactor.

Necessary for normal cell division and for the maintenance of normal septation. The chain is Probable GTP-binding protein EngB from Sinorhizobium medicae (strain WSM419) (Ensifer medicae).